The chain runs to 416 residues: MSPTADFDPKPRRASVAVDVGGVIVGGGAPVVVQSMTNTDTADIDSTVAQVAALHRAGSELVRITVDRDESAAAVPKIRERLLRLGMDVPLIGDFHYVGHKLLADHPDCAAALAKYRINPGNVGFKDKKDKQFAEIIEMAIRYDKPVRVGVNWGSLDQDLLTALMDENARAGSPLSARQVTREAIVQSALLSAALAEEIGLPRNRIILSAKVSQVQDLIAVNSMLAERSNHALHLGLTEAGMGTKGIVASSAAMGFVLQHGIGDTIRVSLTPEPNGDRTREVQVAQEILQVMGFRQFIPVVAACPGCGRTTSTVFQELAQNIQNDIRKNMPVWREKYPGVEALNVAVMGCIVNGPGESKHADIGISLPGTGETPAAPVFIDGKKALTLRGPNIAADFEALVVDYIEKRFGQRTAAE.

[4Fe-4S] cluster is bound by residues Cys-304, Cys-307, Cys-350, and Glu-357.

The protein belongs to the IspG family. The cofactor is [4Fe-4S] cluster.

It catalyses the reaction (2E)-4-hydroxy-3-methylbut-2-enyl diphosphate + oxidized [flavodoxin] + H2O + 2 H(+) = 2-C-methyl-D-erythritol 2,4-cyclic diphosphate + reduced [flavodoxin]. The protein operates within isoprenoid biosynthesis; isopentenyl diphosphate biosynthesis via DXP pathway; isopentenyl diphosphate from 1-deoxy-D-xylulose 5-phosphate: step 5/6. Its function is as follows. Converts 2C-methyl-D-erythritol 2,4-cyclodiphosphate (ME-2,4cPP) into 1-hydroxy-2-methyl-2-(E)-butenyl 4-diphosphate. In Rhizobium leguminosarum bv. trifolii (strain WSM2304), this protein is 4-hydroxy-3-methylbut-2-en-1-yl diphosphate synthase (flavodoxin).